The chain runs to 591 residues: L-fucose isomerase (591 aa).

Active-site proton acceptor residues include Glu337 and Asp361. Residues Glu337, Asp361, and His528 each coordinate Mn(2+).

This sequence belongs to the L-fucose isomerase family. As to quaternary structure, homohexamer. The cofactor is Mn(2+).

The protein localises to the cytoplasm. It catalyses the reaction L-fucose = L-fuculose. It participates in carbohydrate degradation; L-fucose degradation; L-lactaldehyde and glycerone phosphate from L-fucose: step 1/3. Functionally, converts the aldose L-fucose into the corresponding ketose L-fuculose. The chain is L-fucose isomerase from Citrobacter koseri (strain ATCC BAA-895 / CDC 4225-83 / SGSC4696).